The primary structure comprises 887 residues: Phosphatidylinositol 3-kinase catalytic subunit type 3 (887 aa).

Residues 35 to 184 (YKAVLEDPML…LAKLTKAHRQ (150 aa)) form the C2 PI3K-type domain. Residues 149–170 (VEADGSEPTRTPGRTSSTLSED) are disordered. The span at 156-170 (PTRTPGRTSSTLSED) shows a compositional bias: polar residues. Threonine 163 is modified (phosphothreonine; by AMPK). A Phosphoserine; by AMPK modification is found at serine 165. Phosphoserine occurs at positions 244, 261, and 282. Residues 283–520 (DHDLKPNATT…PKTHEMYLNV (238 aa)) form the PIK helical domain. A disordered region spans residues 415 to 466 (LEPTKKDSQTSASESLSNSGVSSGDIDSSQIITNPLPPVASPPPASKAKEVS). Positions 425–437 (SASESLSNSGVSS) are enriched in low complexity. A compositionally biased stretch (pro residues) spans 449-459 (PLPPVASPPPA). One can recognise a PI3K/PI4K catalytic domain in the interval 605-871 (IPETATLFKS…LIDESVHALF (267 aa)). The interval 611–617 (LFKSALM) is G-loop. Residues 740–748 (GVGDRHLDN) are catalytic loop. An activation loop region spans residues 759–780 (HIDFGYILGRDPKPLPPPMKLN).

This sequence belongs to the PI3/PI4-kinase family. Component of the PI3K (PI3KC3/PI3K-III/class III phosphatidylinositol 3-kinase) complex the core of which is composed of the catalytic subunit PIK3C3, the regulatory subunit PIK3R4 and BECN1 associating with additional regulatory/auxiliary subunits to form alternative complex forms. Alternative complex forms containing a fourth regulatory subunit in a mutually exclusive manner are: the PI3K complex I (PI3KC3-C1) containing ATG14, and the PI3K complex II (PI3KC3-C2) containing UVRAG. PI3KC3-C1 displays a V-shaped architecture with PIK3R4 serving as a bridge between PIK3C3 and the ATG14:BECN1 subcomplex. Both, PI3KC3-C1 and PI3KC3-C2, can associate with further regulatory subunits such as RUBCN, SH3GLB1/Bif-1 and AMBRA1. PI3KC3-C1 probably associates with PIK3CB. Interacts with RAB7A in the presence of PIK3R4. Interacts with AMBRA1. Interacts with BECN1P1/BECN2. Interacts with SLAMF1. May be a component of a complex composed of RAB5A (in GDP-bound form), DYN2 and PIK3C3. Interacts with NCKAP1L. Interacts with ATG14; this interaction is increased in the absence of TMEM39A. Interacts with STEEP1; the interaction is STING1-dependent and required for trafficking of STING1 from the endoplasmic reticulum. Interacts with YWHAG. Interacts with ARMC3. It depends on Mn(2+) as a cofactor. Post-translationally, ubiquitinated via 'Lys-29'- and 'Lys-48'-linked ubiquitination by UBE3C, promoting its degradation. Deubiquitination by ZRANB1/TRABID promotes its stabilization, leading to autophagosome maturation.

The protein resides in the midbody. It is found in the late endosome. Its subcellular location is the cytoplasmic vesicle. The protein localises to the autophagosome. The enzyme catalyses a 1,2-diacyl-sn-glycero-3-phospho-(1D-myo-inositol) + ATP = a 1,2-diacyl-sn-glycero-3-phospho-(1D-myo-inositol-3-phosphate) + ADP + H(+). Its function is as follows. Catalytic subunit of the PI3K complex that mediates formation of phosphatidylinositol 3-phosphate; different complex forms are believed to play a role in multiple membrane trafficking pathways: PI3KC3-C1 is involved in initiation of autophagosomes and PI3KC3-C2 in maturation of autophagosomes and endocytosis. As part of PI3KC3-C1, promotes endoplasmic reticulum membrane curvature formation prior to vesicle budding. Involved in regulation of degradative endocytic trafficking and required for the abscission step in cytokinesis, probably in the context of PI3KC3-C2. Involved in the transport of lysosomal enzyme precursors to lysosomes. Required for transport from early to late endosomes. This chain is Phosphatidylinositol 3-kinase catalytic subunit type 3, found in Mus musculus (Mouse).